The chain runs to 324 residues: Cathepsin L-like proteinase (324 aa).

The first 16 residues, 1-16, serve as a signal peptide directing secretion; it reads MKLIIALAALIVVINA. Intrachain disulfides connect Cys131-Cys174, Cys165-Cys206, and Cys263-Cys312. Cys134 is a catalytic residue. Active-site residues include His270 and Asn290.

It belongs to the peptidase C1 family. In terms of tissue distribution, expressed in larval carcasses and gut, and adult gut.

This Phaedon cochleariae (Mustard beetle) protein is Cathepsin L-like proteinase.